A 244-amino-acid chain; its full sequence is Triosephosphate isomerase (244 aa).

Residue 9–11 participates in substrate binding; that stretch reads NWK. Residue His93 is the Electrophile of the active site. The Proton acceptor role is filled by Glu161. Residues Gly167, Ser206, and 227-228 each bind substrate; that span reads GG.

It belongs to the triosephosphate isomerase family. As to quaternary structure, homodimer.

It is found in the cytoplasm. The catalysed reaction is D-glyceraldehyde 3-phosphate = dihydroxyacetone phosphate. It functions in the pathway carbohydrate biosynthesis; gluconeogenesis. It participates in carbohydrate degradation; glycolysis; D-glyceraldehyde 3-phosphate from glycerone phosphate: step 1/1. Its function is as follows. Involved in the gluconeogenesis. Catalyzes stereospecifically the conversion of dihydroxyacetone phosphate (DHAP) to D-glyceraldehyde-3-phosphate (G3P). This chain is Triosephosphate isomerase, found in Deinococcus geothermalis (strain DSM 11300 / CIP 105573 / AG-3a).